We begin with the raw amino-acid sequence, 96 residues long: MKQIIPALITLSFSPMAIAALPPQYQNVKDLEAMVNYVKENPDVAATLKSIDLENQTINYGQDCQVTFERKPSPKPLGWAGPAELLQFKAINCPRE.

Residues 1-19 form the signal peptide; sequence MKQIIPALITLSFSPMAIA.

This is an uncharacterized protein from Synechocystis sp. (strain ATCC 27184 / PCC 6803 / Kazusa).